The sequence spans 303 residues: Uricase (303 aa).

An N-acetylalanine modification is found at Ala2. N6-acetyllysine; alternate is present on residues Lys10 and Lys23. N6-succinyllysine; alternate occurs at positions 10 and 23. The active-site Charge relay system is Lys23. N6-acetyllysine occurs at positions 27 and 36. 2 positions are modified to phosphoserine: Ser39 and Ser63. Residue Thr68 is the Charge relay system of the active site. 2 residues coordinate urate: Thr68 and Asp69. N6-acetyllysine is present on residues Lys118, Lys122, and Lys164. Phe170 is a binding site for urate. Residues Lys175 and Lys185 each carry the N6-acetyllysine modification. Arg187 is a binding site for urate. Residue Lys220 is modified to N6-acetyllysine; alternate. An N6-succinyllysine; alternate modification is found at Lys220. Ser231 bears the Phosphoserine mark. Residues Val234, Gln235, and Asn261 each contribute to the urate site. The active-site Charge relay system is His263. At Lys277 the chain carries N6-acetyllysine. Tyr288 carries the post-translational modification Phosphotyrosine. Residues 301-303 (SRL) carry the Microbody targeting signal motif.

It belongs to the uricase family. In terms of tissue distribution, expressed in liver. Not detected in other tissues tested.

It localises to the peroxisome. The enzyme catalyses urate + O2 + H2O = 5-hydroxyisourate + H2O2. It participates in purine metabolism; urate degradation; (S)-allantoin from urate: step 1/3. With respect to regulation, competitively inhibited by xanthine. Functionally, catalyzes the oxidation of uric acid to 5-hydroxyisourate, which is further processed to form (S)-allantoin. The polypeptide is Uricase (Uox) (Rattus norvegicus (Rat)).